We begin with the raw amino-acid sequence, 744 residues long: NAD(P)H-quinone oxidoreductase subunit 5, chloroplastic (744 aa).

A run of 16 helical transmembrane segments spans residues 9–29 (WIIP…LLFF), 40–60 (WAFQ…NLSI), 89–109 (IDPL…MVLI), 125–145 (FAYM…SNLI), 147–167 (IYIF…FWFT), 185–205 (GDFG…SFEF), 219–239 (NEVN…GAIA), 258–278 (TPIS…FLVA), 290–312 (IMNF…ALAQ), 327–347 (LGYM…FHLI), 354–374 (ALLF…VGYC), 396–416 (TSFF…CFWS), 425–445 (WLYS…TAFY), 549–569 (LFPI…GIPF), 608–628 (VFSV…YKPV), and 724–744 (YLFF…FFHF).

Belongs to the complex I subunit 5 family. As to quaternary structure, NDH is composed of at least 16 different subunits, 5 of which are encoded in the nucleus.

The protein resides in the plastid. The protein localises to the chloroplast thylakoid membrane. The enzyme catalyses a plastoquinone + NADH + (n+1) H(+)(in) = a plastoquinol + NAD(+) + n H(+)(out). It carries out the reaction a plastoquinone + NADPH + (n+1) H(+)(in) = a plastoquinol + NADP(+) + n H(+)(out). Its function is as follows. NDH shuttles electrons from NAD(P)H:plastoquinone, via FMN and iron-sulfur (Fe-S) centers, to quinones in the photosynthetic chain and possibly in a chloroplast respiratory chain. The immediate electron acceptor for the enzyme in this species is believed to be plastoquinone. Couples the redox reaction to proton translocation, and thus conserves the redox energy in a proton gradient. The sequence is that of NAD(P)H-quinone oxidoreductase subunit 5, chloroplastic (ndhF) from Gerbera jamesonii (Transvaal daisy).